The chain runs to 257 residues: Putative aldolase class 2 protein CC_1201 (257 aa).

3 residues coordinate Zn(2+): histidine 114, histidine 116, and histidine 177.

This sequence belongs to the aldolase class II family. It depends on Zn(2+) as a cofactor.

The protein is Putative aldolase class 2 protein CC_1201 of Caulobacter vibrioides (strain ATCC 19089 / CIP 103742 / CB 15) (Caulobacter crescentus).